A 147-amino-acid polypeptide reads, in one-letter code: Protein Turandot Z (147 aa).

An N-terminal signal peptide occupies residues 1 to 23 (MYFAIRLSFVLAVLICLTGNGSA).

It belongs to the Turandot family.

It is found in the secreted. Functionally, a humoral factor that may play a role in stress tolerance. This is Protein Turandot Z from Drosophila melanogaster (Fruit fly).